A 483-amino-acid chain; its full sequence is MGIINGKEFIDRLNKLENEIWYDGEKIKGNISEHPAFKGIIKTKSSLYELQTKDELIHEMTYCLPGDHNRIGLSYLQPKTKNDLKKRRTMIEHWARHTHGMMGRSPDYMNTVMMSFASSAELLKDKENCFPEHILDMYEQAAKHDLSFTHTFITPQVNRSQSYFGLSEKPISAKVIDRTEKGLMIHGARLLATQGGLTDEILVFSAPKFFFETDEAYAFSIPSNTKGVKFITRESFVLSDSSFNHPLSSRYEEMDSIVVFDHVLVPWNRVFFYDNVEAAKDFMTKSSFHAFTFHQVVIRQMIKIEFLLGVAQLLVDTINVSEYQHIQEKLSEIIVGLETIKALIDKSENDAQLDEFGYMRPCLIPLQVISTIIPKLYPRFTEIIQLIGASGMVTLPTENAFDSEIREDLDQYLQATNTNAEERVKIFRLAWDLTMSSFGTRQTHYERYFFGDPIRISSRLYTSYPKQEQLNMIKTFLHADTEH.

Residues 104–108 and His-150 contribute to the substrate site; that span reads RSPDY. FAD is bound by residues 150-152, 156-159, and Thr-193; these read HTF and QVNR. Position 206–207 (206–207) interacts with substrate; it reads AP. 452-455 lines the FAD pocket; it reads DPIR.

This sequence belongs to the FADH(2)-utilizing monooxygenase family.

The enzyme catalyses 4-hydroxyphenylacetate + FADH2 + O2 = 3,4-dihydroxyphenylacetate + FAD + H2O + H(+). Its pathway is aromatic compound metabolism; 4-hydroxyphenylacetate degradation; pyruvate and succinate semialdehyde from 4-hydroxyphenylacetate: step 1/7. In terms of biological role, catalyzes the hydroxylation of 4-hydroxyphenylacetic acid (4HPA), leading to the production of 3,4-dihydroxyphenylacetic acid (DHPA). The polypeptide is Probable 4-hydroxyphenylacetate 3-monooxygenase (yoaI) (Bacillus subtilis (strain 168)).